Reading from the N-terminus, the 947-residue chain is Isoleucine--tRNA ligase (947 aa).

A 'HIGH' region motif is present at residues 57-67; it reads PYANGNIHLGH. Glutamate 568 is a binding site for L-isoleucyl-5'-AMP. The 'KMSKS' region signature appears at 609-613; the sequence is KMSKS. Position 612 (lysine 612) interacts with ATP. Cysteine 908, cysteine 911, cysteine 926, and cysteine 929 together coordinate Zn(2+).

It belongs to the class-I aminoacyl-tRNA synthetase family. IleS type 1 subfamily. In terms of assembly, monomer. It depends on Zn(2+) as a cofactor.

Its subcellular location is the cytoplasm. The catalysed reaction is tRNA(Ile) + L-isoleucine + ATP = L-isoleucyl-tRNA(Ile) + AMP + diphosphate. In terms of biological role, catalyzes the attachment of isoleucine to tRNA(Ile). As IleRS can inadvertently accommodate and process structurally similar amino acids such as valine, to avoid such errors it has two additional distinct tRNA(Ile)-dependent editing activities. One activity is designated as 'pretransfer' editing and involves the hydrolysis of activated Val-AMP. The other activity is designated 'posttransfer' editing and involves deacylation of mischarged Val-tRNA(Ile). The chain is Isoleucine--tRNA ligase from Persephonella marina (strain DSM 14350 / EX-H1).